A 90-amino-acid polypeptide reads, in one-letter code: Protein RALF-like 3 (90 aa).

Residues M1–A29 form the signal peptide. Cystine bridges form between C59–C67 and C80–C86.

It belongs to the plant rapid alkalinization factor (RALF) family.

The protein resides in the secreted. Cell signaling peptide that may regulate plant stress, growth, and development. Mediates a rapid alkalinization of extracellular space by mediating a transient increase in the cytoplasmic Ca(2+) concentration leading to a calcium-dependent signaling events through a cell surface receptor and a concomitant activation of some intracellular mitogen-activated protein kinases. The sequence is that of Protein RALF-like 3 (RALFL3) from Arabidopsis thaliana (Mouse-ear cress).